We begin with the raw amino-acid sequence, 298 residues long: UDP-3-O-acyl-N-acetylglucosamine deacetylase (298 aa).

Zn(2+) is bound by residues His-79, His-239, and Asp-243. The active-site Proton donor is His-266.

It belongs to the LpxC family. The cofactor is Zn(2+).

The enzyme catalyses a UDP-3-O-[(3R)-3-hydroxyacyl]-N-acetyl-alpha-D-glucosamine + H2O = a UDP-3-O-[(3R)-3-hydroxyacyl]-alpha-D-glucosamine + acetate. The protein operates within glycolipid biosynthesis; lipid IV(A) biosynthesis; lipid IV(A) from (3R)-3-hydroxytetradecanoyl-[acyl-carrier-protein] and UDP-N-acetyl-alpha-D-glucosamine: step 2/6. Catalyzes the hydrolysis of UDP-3-O-myristoyl-N-acetylglucosamine to form UDP-3-O-myristoylglucosamine and acetate, the committed step in lipid A biosynthesis. The chain is UDP-3-O-acyl-N-acetylglucosamine deacetylase from Wigglesworthia glossinidia brevipalpis.